The sequence spans 403 residues: Octaketide synthase 1 (403 aa).

Cys174 is a catalytic residue. Residues Ser281 and 318-321 (GGRA) contribute to the CoA site.

It belongs to the thiolase-like superfamily. Chalcone/stilbene synthases family. As to quaternary structure, homodimer.

Its pathway is secondary metabolite biosynthesis; flavonoid biosynthesis. Catalyzes the iterative condensations of 8 molecules of malonyl-CoA to produce aromatic octaketides, SEK4 and SEK4b, the products of the minimal polyketide synthase for the benzoisochromanequinone actinorhodin. May be involved in the biosynthesis of the octaketide barbaloin. This is Octaketide synthase 1 from Aloe arborescens (Kidachi aloe).